The primary structure comprises 310 residues: ADP-L-glycero-D-manno-heptose-6-epimerase (310 aa).

NADP(+)-binding positions include 10–11, 31–32, Lys38, Lys53, 75–79, and Asn92; these read FI, DN, and EGACS. Tyr140 (proton acceptor) is an active-site residue. Lys144 lines the NADP(+) pocket. A substrate-binding site is contributed by Asn169. 2 residues coordinate NADP(+): Val170 and Lys178. Lys178 acts as the Proton acceptor in catalysis. Residues Ser180, His187, 201-204, Arg209, and Tyr272 each bind substrate; that span reads FEGS.

Belongs to the NAD(P)-dependent epimerase/dehydratase family. HldD subfamily. As to quaternary structure, homopentamer. The cofactor is NADP(+).

The enzyme catalyses ADP-D-glycero-beta-D-manno-heptose = ADP-L-glycero-beta-D-manno-heptose. It participates in nucleotide-sugar biosynthesis; ADP-L-glycero-beta-D-manno-heptose biosynthesis; ADP-L-glycero-beta-D-manno-heptose from D-glycero-beta-D-manno-heptose 7-phosphate: step 4/4. Catalyzes the interconversion between ADP-D-glycero-beta-D-manno-heptose and ADP-L-glycero-beta-D-manno-heptose via an epimerization at carbon 6 of the heptose. The protein is ADP-L-glycero-D-manno-heptose-6-epimerase of Salmonella dublin (strain CT_02021853).